We begin with the raw amino-acid sequence, 432 residues long: Enolase (432 aa).

Gln-167 contacts (2R)-2-phosphoglycerate. Glu-209 serves as the catalytic Proton donor. Mg(2+) is bound by residues Asp-246, Glu-287, and Asp-314. (2R)-2-phosphoglycerate is bound by residues Lys-339, Arg-368, Ser-369, and Lys-390. Residue Lys-339 is the Proton acceptor of the active site.

This sequence belongs to the enolase family. The cofactor is Mg(2+).

It localises to the cytoplasm. The protein resides in the secreted. The protein localises to the cell surface. The catalysed reaction is (2R)-2-phosphoglycerate = phosphoenolpyruvate + H2O. It participates in carbohydrate degradation; glycolysis; pyruvate from D-glyceraldehyde 3-phosphate: step 4/5. In terms of biological role, catalyzes the reversible conversion of 2-phosphoglycerate (2-PG) into phosphoenolpyruvate (PEP). It is essential for the degradation of carbohydrates via glycolysis. This Prochlorococcus marinus (strain MIT 9211) protein is Enolase.